Reading from the N-terminus, the 337-residue chain is NADH-quinone oxidoreductase subunit H (337 aa).

A run of 8 helical transmembrane segments spans residues 9–29 (FAKI…FTYV), 77–97 (FLIA…VIPF), 110–130 (LLYI…AGWA), 154–174 (MGFA…SGIV), 181–201 (FWEW…ISGV), 229–249 (MAFA…SFLA), 274–294 (VPGI…YLWF), and 313–333 (VLIP…YGGV).

This sequence belongs to the complex I subunit 1 family. In terms of assembly, NDH-1 is composed of 14 different subunits. Subunits NuoA, H, J, K, L, M, N constitute the membrane sector of the complex.

The protein localises to the cell inner membrane. It catalyses the reaction a quinone + NADH + 5 H(+)(in) = a quinol + NAD(+) + 4 H(+)(out). In terms of biological role, NDH-1 shuttles electrons from NADH, via FMN and iron-sulfur (Fe-S) centers, to quinones in the respiratory chain. The immediate electron acceptor for the enzyme in this species is believed to be ubiquinone. Couples the redox reaction to proton translocation (for every two electrons transferred, four hydrogen ions are translocated across the cytoplasmic membrane), and thus conserves the redox energy in a proton gradient. This subunit may bind ubiquinone. The polypeptide is NADH-quinone oxidoreductase subunit H (Halorhodospira halophila (strain DSM 244 / SL1) (Ectothiorhodospira halophila (strain DSM 244 / SL1))).